Here is a 406-residue protein sequence, read N- to C-terminus: Ubiquitin-associated domain-containing protein 1 (406 aa).

In terms of domain architecture, Ubiquitin-like spans 14 to 98 (LRLHICSLDG…LLLVKKRAPP (85 aa)). Positions 95 to 122 (RAPPPTPKMAEVSADEKRKQDQKAPDKD) are disordered. A compositionally biased stretch (basic and acidic residues) spans 108-122 (ADEKRKQDQKAPDKD). The UBA 1 domain maps to 186–231 (EDDEDRVDEVALRQLTEMGFPESRAVKALRLNHMSVTQAMEWLIEH). Residues 238 to 257 (DAPLPCENSSEAAGGLATGE) are compositionally biased toward low complexity. The tract at residues 238-272 (DAPLPCENSSEAAGGLATGEAETKPTLGAGAEDPK) is disordered. The UBA 2 domain occupies 289-329 (RPDPRAVIALMEMGFDEKEVIDALRVNNNQQDAACEWLLGD). The STI1 domain maps to 354 to 393 (NPVVQLGLTNPKTLLAFEDMLENPLNSTQWMNDPETGPVM).

Component of the KPC complex.

It is found in the cytoplasm. The protein operates within protein modification; protein ubiquitination. Its function is as follows. Non-catalytic component of the KPC complex, a E3 ubiquitin-protein ligase complex that mediates polyubiquitination of target proteins, such as CDKN1B and NFKB1. Within the KPC complex, UBAC1 acts as an adapter that promotes the transfer of target proteins that have been polyubiquitinated by RNF123/KPC1 to the 26S proteasome. The protein is Ubiquitin-associated domain-containing protein 1 (ubac1) of Xenopus tropicalis (Western clawed frog).